We begin with the raw amino-acid sequence, 683 residues long: MADPENEVLRSTFPSYMAEGERLYLCGEFAKAAHSFSNALHLQSGDKNCLVARSKCFLKMGELEKSLEDAEASLQGDPTFCKGILQKAETLYTMGDFEFALVFYHRGYKLRPDREFKVGIQKAQEAINNSVGSPSSIKLENKGDLSFLSKQAESMRAQQKPHPVRQLIHHPKRESKRKGSLKSEKIVRQLLGELYVDKEYLEKLLLDEDLIKGTIKHGLTVEDLIMTGINYLETRSDFWRQQKPIYARERDRKLMQEKWLRDRKRRPSQTARYILKSLEDIDMLLTSGSAEGSLQKAEKVLKKVLEWNKEEVPNKDELVGNLYSCIGNAQIELGQMVAALQSHRKDLEIAKEYDLPDAKSRALDNIGRVFARVGKFQQAIDTWEEKIPLAKTTLEKTWLFHEIGRCYLELDQAWEAQSYGEKSQQCAEEEGDMEWQLNASVLVAQAQVKLRDFESAVNNFEKALERAKLVHNNEAQQAIINALDDANKGIIEELKKTNYREILKEKKEKENATMLDGQTRTAKEKETRKTKDEPEKVMKQWVQEQTEKQLEGVLSKETLGVTARQPEQRQREDPEKASWRKELGAKERGPGDTAKGQFGEAGRTEQNREETREIYRRPSELDQNLSDESSPRESEGLEKRLSKTDGGELEALGKTESGEIKEMEITENSEKIEKDEKEDEPIE.

TPR repeat units lie at residues 13–46 (FPSYMAEGERLYLCGEFAKAAHSFSNALHLQSGD), 47–80 (KNCLVARSKCFLKMGELEKSLEDAEASLQGDPTF), 48–80 (NCLVARSKCFLKMGELEKSLEDAEASLQGDPTF), and 81–114 (CKGILQKAETLYTMGDFEFALVFYHRGYKLRPDR). Residues 158–179 (QQKPHPVRQLIHHPKRESKRKG) form a disordered region. Residues 167 to 179 (LIHHPKRESKRKG) are compositionally biased toward basic residues. TPR repeat units follow at residues 275–311 (LKSLEDIDMLLTSGSAEGSLQKAEKVLKKVLEWNKEE), 320–353 (GNLYSCIGNAQIELGQMVAALQSHRKDLEIAKEY), 360–393 (SRALDNIGRVFARVGKFQQAIDTWEEKIPLAKTT), 397–430 (TWLFHEIGRCYLELDQAWEAQSYGEKSQQCAEEE), and 437–470 (LNASVLVAQAQVKLRDFESAVNNFEKALERAKLV). 2 disordered regions span residues 510 to 537 (ENATMLDGQTRTAKEKETRKTKDEPEKV) and 553 to 683 (VLSK…EPIE). 4 stretches are compositionally biased toward basic and acidic residues: residues 521-537 (TAKEKETRKTKDEPEKV), 566-590 (PEQRQREDPEKASWRKELGAKERGP), 602-620 (GRTEQNREETREIYRRPSE), and 629-675 (SSPR…IEKD). One copy of the TPR 15 repeat lies at 592–625 (DTAKGQFGEAGRTEQNREETREIYRRPSELDQNL).

As to quaternary structure, component of the outer dynein arm-docking complex along with ODAD1, ODAD2 and ODAD3. Interacts with ODAD1; this interaction may facilitate the recruitment and/or attachment of outer dynein arm docking complex proteins, including ODAD1, ODAD3 and ODAD2, to ciliary axonemes. Interacts with components of the IFT complex A, including IFT140, TTC21B/IFT139 and WDR19/IFT144, and the IFT complex B, including IFT46, IFT52 and IFT57. Interacts with CFAP53. As to expression, expressed in trachea multiciliated cells.

The protein resides in the cytoplasm. It is found in the cytoskeleton. Its subcellular location is the cilium axoneme. In terms of biological role, component of the outer dynein arm-docking complex (ODA-DC) that mediates outer dynein arms (ODA) binding onto the doublet microtubule. Plays an essential role for the assembly of ODA-DC and for the docking of ODA in ciliary axoneme. The chain is Outer dynein arm-docking complex subunit 4 from Bos taurus (Bovine).